Here is a 609-residue protein sequence, read N- to C-terminus: Arginine--tRNA ligase (609 aa).

The 'HIGH' region motif lies at 132–142 (ANPTSSLHVGH).

Belongs to the class-I aminoacyl-tRNA synthetase family. Monomer.

The protein resides in the cytoplasm. The enzyme catalyses tRNA(Arg) + L-arginine + ATP = L-arginyl-tRNA(Arg) + AMP + diphosphate. This Psychrobacter cryohalolentis (strain ATCC BAA-1226 / DSM 17306 / VKM B-2378 / K5) protein is Arginine--tRNA ligase.